The primary structure comprises 353 residues: Holliday junction branch migration complex subunit RuvB (353 aa).

The interval 4–190 (TDKLQAPRVI…FGIVARLEFY (187 aa)) is large ATPase domain (RuvB-L). ATP-binding positions include L29, R30, G71, K74, T75, T76, 137-139 (EDF), R180, Y190, and R227. A Mg(2+)-binding site is contributed by T75. A small ATPAse domain (RuvB-S) region spans residues 191 to 261 (TPHELAYIVG…VADAALLMLD (71 aa)). The head domain (RuvB-H) stretch occupies residues 264-353 (HLGLDLMDRK…DESAELFSAP (90 aa)). Positions 319 and 324 each coordinate DNA.

The protein belongs to the RuvB family. Homohexamer. Forms an RuvA(8)-RuvB(12)-Holliday junction (HJ) complex. HJ DNA is sandwiched between 2 RuvA tetramers; dsDNA enters through RuvA and exits via RuvB. An RuvB hexamer assembles on each DNA strand where it exits the tetramer. Each RuvB hexamer is contacted by two RuvA subunits (via domain III) on 2 adjacent RuvB subunits; this complex drives branch migration. In the full resolvosome a probable DNA-RuvA(4)-RuvB(12)-RuvC(2) complex forms which resolves the HJ.

The protein localises to the cytoplasm. It carries out the reaction ATP + H2O = ADP + phosphate + H(+). In terms of biological role, the RuvA-RuvB-RuvC complex processes Holliday junction (HJ) DNA during genetic recombination and DNA repair, while the RuvA-RuvB complex plays an important role in the rescue of blocked DNA replication forks via replication fork reversal (RFR). RuvA specifically binds to HJ cruciform DNA, conferring on it an open structure. The RuvB hexamer acts as an ATP-dependent pump, pulling dsDNA into and through the RuvAB complex. RuvB forms 2 homohexamers on either side of HJ DNA bound by 1 or 2 RuvA tetramers; 4 subunits per hexamer contact DNA at a time. Coordinated motions by a converter formed by DNA-disengaged RuvB subunits stimulates ATP hydrolysis and nucleotide exchange. Immobilization of the converter enables RuvB to convert the ATP-contained energy into a lever motion, pulling 2 nucleotides of DNA out of the RuvA tetramer per ATP hydrolyzed, thus driving DNA branch migration. The RuvB motors rotate together with the DNA substrate, which together with the progressing nucleotide cycle form the mechanistic basis for DNA recombination by continuous HJ branch migration. Branch migration allows RuvC to scan DNA until it finds its consensus sequence, where it cleaves and resolves cruciform DNA. The chain is Holliday junction branch migration complex subunit RuvB from Aromatoleum aromaticum (strain DSM 19018 / LMG 30748 / EbN1) (Azoarcus sp. (strain EbN1)).